We begin with the raw amino-acid sequence, 241 residues long: Kynurenine formamidase (241 aa).

Positions His-23–Trp-27 match the HGGXW motif. Residue Ser-95 is the Nucleophile of the active site. Catalysis depends on residues Asp-191 and His-223.

It belongs to the kynurenine formamidase family. As to quaternary structure, homodimer.

It catalyses the reaction N-formyl-L-kynurenine + H2O = L-kynurenine + formate + H(+). It functions in the pathway amino-acid degradation; L-tryptophan degradation via kynurenine pathway; L-kynurenine from L-tryptophan: step 2/2. Functionally, catalyzes the hydrolysis of N-formyl-L-kynurenine to L-kynurenine, the second step in the kynurenine pathway of tryptophan degradation. Kynurenine may be further oxidized to nicotinic acid, NAD(H) and NADP(H). Required for elimination of toxic metabolites. The sequence is that of Kynurenine formamidase from Eremothecium gossypii (strain ATCC 10895 / CBS 109.51 / FGSC 9923 / NRRL Y-1056) (Yeast).